The chain runs to 358 residues: Alanine racemase (358 aa).

The active-site Proton acceptor; specific for D-alanine is Lys34. N6-(pyridoxal phosphate)lysine is present on Lys34. Residue Arg129 coordinates substrate. The Proton acceptor; specific for L-alanine role is filled by Tyr254. Met302 lines the substrate pocket.

It belongs to the alanine racemase family. It depends on pyridoxal 5'-phosphate as a cofactor.

The enzyme catalyses L-alanine = D-alanine. The protein operates within amino-acid biosynthesis; D-alanine biosynthesis; D-alanine from L-alanine: step 1/1. In terms of biological role, catalyzes the interconversion of L-alanine and D-alanine. May also act on other amino acids. The protein is Alanine racemase (alr) of Vibrio atlanticus (strain LGP32) (Vibrio splendidus (strain Mel32)).